Here is a 1391-residue protein sequence, read N- to C-terminus: DNA-directed RNA polymerase subunit beta' (1391 aa).

Zn(2+)-binding residues include C72, C74, C87, and C90. Residues D462, D464, and D466 each contribute to the Mg(2+) site. The Zn(2+) site is built by C816, C890, C897, and C900.

This sequence belongs to the RNA polymerase beta' chain family. In terms of assembly, the RNAP catalytic core consists of 2 alpha, 1 beta, 1 beta' and 1 omega subunit. When a sigma factor is associated with the core the holoenzyme is formed, which can initiate transcription. Mg(2+) is required as a cofactor. The cofactor is Zn(2+).

It catalyses the reaction RNA(n) + a ribonucleoside 5'-triphosphate = RNA(n+1) + diphosphate. DNA-dependent RNA polymerase catalyzes the transcription of DNA into RNA using the four ribonucleoside triphosphates as substrates. The polypeptide is DNA-directed RNA polymerase subunit beta' (Neisseria gonorrhoeae (strain NCCP11945)).